A 352-amino-acid polypeptide reads, in one-letter code: CD5 antigen-like (352 aa).

An N-terminal signal peptide occupies residues Met1 to Ser21. SRCR domains follow at residues Val27–Glu128, Val141–Glu241, and Leu246–Thr348. Intrachain disulfides connect Cys36–Cys70, Cys52–Cys117, Cys65–Cys127, Cys98–Cys108, Cys166–Cys230, Cys179–Cys240, Cys211–Cys221, Cys255–Cys289, Cys271–Cys337, Cys284–Cys347, and Cys317–Cys327. N-linked (GlcNAc...) asparagine glycosylation is present at Asn99. An N-linked (GlcNAc...) asparagine glycan is attached at Asn229.

As to quaternary structure, interacts with FASN; the interaction is direct. Interacts (via SRCR2 and SRCR3) with pentameric IgM (via Fc region); disulfide-linked. N-glycosylated. N-glycan at Asn-99 possesses only alpha2,6-sialylated terminals, while Asn-229 possesses both alpha2,6-sialylated and non-sialylated terminals. N-glycosylation increases secretion. Specifically expressed in tissue macrophages. Expressed in thymus, liver, spleen and lymph nodes. Present in Th17 cells; mainly present in non-pathogenic Th17 cells.

The protein resides in the secreted. It localises to the cytoplasm. In terms of biological role, secreted protein that acts as a key regulator of lipid synthesis: mainly expressed by macrophages in lymphoid and inflamed tissues and regulates mechanisms in inflammatory responses, such as infection or atherosclerosis. Able to inhibit lipid droplet size in adipocytes. Following incorporation into mature adipocytes via CD36-mediated endocytosis, associates with cytosolic FASN, inhibiting fatty acid synthase activity and leading to lipolysis, the degradation of triacylglycerols into glycerol and free fatty acids (FFA). CD5L-induced lipolysis occurs with progression of obesity: participates in obesity-associated inflammation following recruitment of inflammatory macrophages into adipose tissues, a cause of insulin resistance and obesity-related metabolic disease. Regulation of intracellular lipids mediated by CD5L has a direct effect on transcription regulation mediated by nuclear receptors ROR-gamma (RORC). Acts as a key regulator of metabolic switch in T-helper Th17 cells. Regulates the expression of pro-inflammatory genes in Th17 cells by altering the lipid content and limiting synthesis of cholesterol ligand of RORC, the master transcription factor of Th17-cell differentiation. CD5L is mainly present in non-pathogenic Th17 cells, where it decreases the content of polyunsaturated fatty acyls (PUFA), affecting two metabolic proteins MSMO1 and CYP51A1, which synthesize ligands of RORC, limiting RORC activity and expression of pro-inflammatory genes. Participates in obesity-associated autoimmunity via its association with IgM, interfering with the binding of IgM to Fcalpha/mu receptor and enhancing the development of long-lived plasma cells that produce high-affinity IgG autoantibodies. Also acts as an inhibitor of apoptosis in macrophages: promotes macrophage survival from the apoptotic effects of oxidized lipids in case of atherosclerosis. Involved in early response to microbial infection against various pathogens by acting as a pattern recognition receptor and by promoting autophagy. This Mus musculus (Mouse) protein is CD5 antigen-like (Cd5l).